Here is a 681-residue protein sequence, read N- to C-terminus: Methionine--tRNA ligase (681 aa).

Positions 18 to 28 match the 'HIGH' region motif; it reads PYANGSIHLGH. Residues C149, C152, C162, and C165 each contribute to the Zn(2+) site. The short motif at 334-338 is the 'KMSKS' region element; sequence KMSKS. An ATP-binding site is contributed by K337. A tRNA-binding domain is found at 580–681; the sequence is DFAKLDLRIV…NGAEPGQRVS (102 aa).

Belongs to the class-I aminoacyl-tRNA synthetase family. MetG type 1 subfamily. As to quaternary structure, homodimer. Zn(2+) is required as a cofactor.

The protein localises to the cytoplasm. The catalysed reaction is tRNA(Met) + L-methionine + ATP = L-methionyl-tRNA(Met) + AMP + diphosphate. Functionally, is required not only for elongation of protein synthesis but also for the initiation of all mRNA translation through initiator tRNA(fMet) aminoacylation. This is Methionine--tRNA ligase from Chromohalobacter salexigens (strain ATCC BAA-138 / DSM 3043 / CIP 106854 / NCIMB 13768 / 1H11).